The primary structure comprises 348 residues: Dihydroorotase (348 aa).

Zn(2+)-binding residues include histidine 17 and histidine 19. Residues histidine 19 to arginine 21 and asparagine 45 contribute to the substrate site. Residues lysine 103, histidine 140, and histidine 178 each coordinate Zn(2+). Lysine 103 is subject to N6-carboxylysine. Histidine 140 is a binding site for substrate. Leucine 223 serves as a coordination point for substrate. Aspartate 251 provides a ligand contact to Zn(2+). Aspartate 251 is a catalytic residue. Substrate contacts are provided by histidine 255 and alanine 267.

This sequence belongs to the metallo-dependent hydrolases superfamily. DHOase family. Class II DHOase subfamily. In terms of assembly, homodimer. Requires Zn(2+) as cofactor.

The enzyme catalyses (S)-dihydroorotate + H2O = N-carbamoyl-L-aspartate + H(+). Its pathway is pyrimidine metabolism; UMP biosynthesis via de novo pathway; (S)-dihydroorotate from bicarbonate: step 3/3. Catalyzes the reversible cyclization of carbamoyl aspartate to dihydroorotate. The protein is Dihydroorotase of Klebsiella pneumoniae (strain 342).